Reading from the N-terminus, the 89-residue chain is Sec translocon accessory complex subunit YrbF (89 aa).

The helical transmembrane segment at 4-24 (GTLGTLVPIILMFAVLYFLLI) threads the bilayer.

The protein belongs to the YajC family. Part of the SecDF-YidC-YajC translocase complex. The SecDF-YidC-YajC translocase forms a supercomplex with SecYEG, called the holo-translocon (HTL).

The protein resides in the cell membrane. Its function is as follows. The SecYEG-SecDF-YajC-YidC holo-translocon (HTL) protein secretase/insertase is a supercomplex required for protein secretion, insertion of proteins into membranes, and assembly of membrane protein complexes. While the SecYEG complex is essential for assembly of a number of proteins and complexes, the SecDF-YajC-YidC subcomplex facilitates these functions. The polypeptide is Sec translocon accessory complex subunit YrbF (yrbF) (Bacillus subtilis (strain 168)).